The chain runs to 150 residues: Large ribosomal subunit protein bL9 (150 aa).

This sequence belongs to the bacterial ribosomal protein bL9 family.

Functionally, binds to the 23S rRNA. The sequence is that of Large ribosomal subunit protein bL9 from Limosilactobacillus reuteri (strain DSM 20016) (Lactobacillus reuteri).